An 85-amino-acid polypeptide reads, in one-letter code: UPF0181 protein YE1782 (85 aa).

Disordered regions lie at residues 1 to 22 (MLAGMPSLSHEEQQEAVERIHQ) and 57 to 85 (DTDFDEHDESDYRRDNEQDADEIEDPYEG). The span at 9-21 (SHEEQQEAVERIH) shows a compositional bias: basic and acidic residues. Acidic residues predominate over residues 74 to 85 (QDADEIEDPYEG).

This sequence belongs to the UPF0181 family.

The protein is UPF0181 protein YE1782 of Yersinia enterocolitica serotype O:8 / biotype 1B (strain NCTC 13174 / 8081).